We begin with the raw amino-acid sequence, 262 residues long: 3-methyl-2-oxobutanoate hydroxymethyltransferase (262 aa).

Mg(2+)-binding residues include D42 and D81. Residues 42-43 (DS), D81, and K110 contribute to the 3-methyl-2-oxobutanoate site. Residue E112 coordinates Mg(2+). Catalysis depends on E180, which acts as the Proton acceptor.

Belongs to the PanB family. Homodecamer; pentamer of dimers. Mg(2+) serves as cofactor.

It is found in the cytoplasm. It catalyses the reaction 3-methyl-2-oxobutanoate + (6R)-5,10-methylene-5,6,7,8-tetrahydrofolate + H2O = 2-dehydropantoate + (6S)-5,6,7,8-tetrahydrofolate. The protein operates within cofactor biosynthesis; (R)-pantothenate biosynthesis; (R)-pantoate from 3-methyl-2-oxobutanoate: step 1/2. Functionally, catalyzes the reversible reaction in which hydroxymethyl group from 5,10-methylenetetrahydrofolate is transferred onto alpha-ketoisovalerate to form ketopantoate. This chain is 3-methyl-2-oxobutanoate hydroxymethyltransferase, found in Legionella pneumophila (strain Paris).